A 331-amino-acid chain; its full sequence is Ornithine carbamoyltransferase, catabolic (331 aa).

Residues 57 to 60 (STRT), Gln-82, Arg-106, and 133 to 136 (HPTQ) each bind carbamoyl phosphate. L-ornithine-binding positions include Asn-166, Asp-230, and 234-235 (SM). Carbamoyl phosphate is bound by residues 272–273 (CL) and Arg-317.

The protein belongs to the aspartate/ornithine carbamoyltransferase superfamily. OTCase family.

Its subcellular location is the cytoplasm. It catalyses the reaction carbamoyl phosphate + L-ornithine = L-citrulline + phosphate + H(+). It functions in the pathway amino-acid degradation; L-arginine degradation via ADI pathway; carbamoyl phosphate from L-arginine: step 2/2. In terms of biological role, reversibly catalyzes the transfer of the carbamoyl group from carbamoyl phosphate (CP) to the N(epsilon) atom of ornithine (ORN) to produce L-citrulline. This chain is Ornithine carbamoyltransferase, catabolic (arcB), found in Clostridium perfringens (strain ATCC 13124 / DSM 756 / JCM 1290 / NCIMB 6125 / NCTC 8237 / Type A).